The chain runs to 412 residues: STAGA complex 65 subunit gamma (412 aa).

The segment at 81–107 (AQTQSQQQTEGVKAEESEPLPSCPGSP) is disordered. S106 carries the phosphoserine modification. Residue K269 forms a Glycyl lysine isopeptide (Lys-Gly) (interchain with G-Cter in SUMO2) linkage. 2 positions are modified to phosphoserine: S321 and S332. The interval 364-412 (EEPMSGMSEAGLPQSPDDSDSSYGSHSTDSLMGSSPVFNQRCRKRMRKI) is disordered. The span at 384–393 (SSYGSHSTDS) shows a compositional bias: low complexity.

Component of the STAGA transcription coactivator-HAT complex, at least composed of SUPT3H, SUPT7L, GCN5L2, TAF5L, TAF6L, TADA3L, TAD1L, TAF10, TAF12 and TAF9. In terms of processing, sumoylated.

It is found in the nucleus. The protein is STAGA complex 65 subunit gamma (Supt7l) of Mus musculus (Mouse).